The chain runs to 121 residues: Apoptin (121 aa).

2 disordered regions span residues 1–28 (MNAL…LETP) and 57–121 (LRSA…RIRL). The segment covering 58–70 (RSATADNSESTGF) has biased composition (polar residues). Basic and acidic residues predominate over residues 88 to 102 (RSCDPSEYRVSELKE).

Belongs to the gyrovirus apoptin family.

Its subcellular location is the host nucleus. Its function is as follows. May act as transcriptional regulator. Induces apoptosis in infected cells. Element of infectious replication cycle. The polypeptide is Apoptin (VP3) (Gallus gallus (Chicken)).